Reading from the N-terminus, the 436-residue chain is Adenylosuccinate synthetase (436 aa).

GTP-binding positions include 12-18 and 40-42; these read GDEGKGK and GHT. Asp13 functions as the Proton acceptor in the catalytic mechanism. Residues Asp13 and Gly40 each contribute to the Mg(2+) site. Residues 13–16, 38–41, Thr128, Arg142, Gln223, Thr238, and Arg302 contribute to the IMP site; these read DEGK and NAGH. His41 (proton donor) is an active-site residue. 298–304 lines the substrate pocket; sequence TTTGRRR. GTP-binding positions include Arg304, 330 to 332, and 412 to 414; these read KLD and SLG.

Belongs to the adenylosuccinate synthetase family. Homodimer. Requires Mg(2+) as cofactor.

It localises to the cytoplasm. It catalyses the reaction IMP + L-aspartate + GTP = N(6)-(1,2-dicarboxyethyl)-AMP + GDP + phosphate + 2 H(+). The protein operates within purine metabolism; AMP biosynthesis via de novo pathway; AMP from IMP: step 1/2. Its function is as follows. Plays an important role in the de novo pathway of purine nucleotide biosynthesis. Catalyzes the first committed step in the biosynthesis of AMP from IMP. This Prochlorococcus marinus (strain AS9601) protein is Adenylosuccinate synthetase.